Here is a 2280-residue protein sequence, read N- to C-terminus: Protein Ycf2 (2280 aa).

1631–1638 serves as a coordination point for ATP; sequence GSIGTGRS.

Belongs to the Ycf2 family.

It localises to the plastid. The protein resides in the chloroplast stroma. Its function is as follows. Probable ATPase of unknown function. Its presence in a non-photosynthetic plant (Epifagus virginiana) and experiments in tobacco indicate that it has an essential function which is probably not related to photosynthesis. This Nicotiana tabacum (Common tobacco) protein is Protein Ycf2 (ycf2-A).